A 432-amino-acid polypeptide reads, in one-letter code: 2-oxoglutarate-dependent dioxygenase AOP2 (432 aa).

The Fe2OG dioxygenase domain maps to 281 to 378; the sequence is SGDDVEANDD…RYTAAIFTCP (98 aa). His-301, Asp-303, and His-358 together coordinate Fe cation. Arg-369 serves as a coordination point for 2-oxoglutarate.

The protein belongs to the iron/ascorbate-dependent oxidoreductase family. The cofactor is Fe(2+).

Functionally, 2-oxoglutarate-dependent dioxygenase involved in glucosinolates biosynthesis. Catalyzes the conversion of methylsulfinylalkyl glucosinolates to alkenyl glucosinolates. This is 2-oxoglutarate-dependent dioxygenase AOP2 (AOP2) from Arabidopsis thaliana (Mouse-ear cress).